Here is a 923-residue protein sequence, read N- to C-terminus: Mitochondrial 10-formyltetrahydrofolate dehydrogenase (923 aa).

A mitochondrion; not cleaved-targeting transit peptide spans 1 to 19 (MLRRGSQALRRFSTGRVYF). The hydrolase domain stretch occupies residues 23 to 331 (LKLALIGQSL…PASQYFSTGE (309 aa)). Phosphoserine is present on Ser31. Lys60 carries the N6-succinyllysine modification. 110–112 (QFI) lines the (6R)-10-formyltetrahydrofolate pocket. The active-site Proton donor is His128. Asp164 contributes to the (6R)-10-formyltetrahydrofolate binding site. Residues 339–416 (AEEVKVAETI…GFIQKVVRKL (78 aa)) enclose the Carrier domain. Residue Ser375 is modified to O-(pantetheine 4'-phosphoryl)serine. The tract at residues 438–923 (MVKMPYQCFI…LKTKTVTLEY (486 aa)) is aldehyde dehydrogenase domain. NADP(+)-binding positions include 592–594 (IPW) and 618–621 (KPAQ). At Ser650 the chain carries Phosphoserine. NADP(+) contacts are provided by residues 651–656 (GGIAGQ) and 671–672 (GS). The residue at position 681 (Lys681) is an N6-succinyllysine. Glu694 (proton acceptor) is an active-site residue. NADP(+) is bound at residue 694-695 (EL). Catalysis depends on Cys728, which acts as the Proton donor. Lys778 serves as a coordination point for NADP(+). The residue at position 788 (Lys788) is an N6-succinyllysine. Residue 825-827 (ESF) participates in NADP(+) binding. N6-acetyllysine is present on Lys903.

In the N-terminal section; belongs to the GART family. The protein in the C-terminal section; belongs to the aldehyde dehydrogenase family. ALDH1L subfamily. Post-translationally, phosphopantetheinylation at Ser-375 by AASDHPPT is required for the formyltetrahydrofolate dehydrogenase activity. In terms of tissue distribution, highly expressed in pancreas, heart, brain and skeletal muscle.

Its subcellular location is the mitochondrion. The enzyme catalyses (6R)-10-formyltetrahydrofolate + NADP(+) + H2O = (6S)-5,6,7,8-tetrahydrofolate + CO2 + NADPH + H(+). Mitochondrial 10-formyltetrahydrofolate dehydrogenase that catalyzes the NADP(+)-dependent conversion of 10-formyltetrahydrofolate to tetrahydrofolate and carbon dioxide. The sequence is that of Mitochondrial 10-formyltetrahydrofolate dehydrogenase from Homo sapiens (Human).